Consider the following 361-residue polypeptide: Chorismate synthase (361 aa).

Residues arginine 48 and arginine 54 each contribute to the NADP(+) site. FMN contacts are provided by residues 125–127 (RSS), 238–239 (NA), glycine 278, 293–297 (KPTSS), and arginine 319.

The protein belongs to the chorismate synthase family. Homotetramer. It depends on FMNH2 as a cofactor.

The enzyme catalyses 5-O-(1-carboxyvinyl)-3-phosphoshikimate = chorismate + phosphate. It functions in the pathway metabolic intermediate biosynthesis; chorismate biosynthesis; chorismate from D-erythrose 4-phosphate and phosphoenolpyruvate: step 7/7. Functionally, catalyzes the anti-1,4-elimination of the C-3 phosphate and the C-6 proR hydrogen from 5-enolpyruvylshikimate-3-phosphate (EPSP) to yield chorismate, which is the branch point compound that serves as the starting substrate for the three terminal pathways of aromatic amino acid biosynthesis. This reaction introduces a second double bond into the aromatic ring system. The chain is Chorismate synthase from Pectobacterium atrosepticum (strain SCRI 1043 / ATCC BAA-672) (Erwinia carotovora subsp. atroseptica).